The following is a 65-amino-acid chain: MSELLTIECPTCGKTVVWGEISPYRPFCSKRCQLIDLGQWANEEKRIPSQSENSDSDDWSGQPEQ.

Residues C9, C12, C28, and C32 each coordinate Zn(2+). Positions 43-65 (EEKRIPSQSENSDSDDWSGQPEQ) are disordered.

The protein belongs to the DNA gyrase inhibitor YacG family. In terms of assembly, interacts with GyrB. The cofactor is Zn(2+).

Inhibits all the catalytic activities of DNA gyrase by preventing its interaction with DNA. Acts by binding directly to the C-terminal domain of GyrB, which probably disrupts DNA binding by the gyrase. In Photorhabdus laumondii subsp. laumondii (strain DSM 15139 / CIP 105565 / TT01) (Photorhabdus luminescens subsp. laumondii), this protein is DNA gyrase inhibitor YacG.